The chain runs to 453 residues: Phosphoglucosamine mutase (453 aa).

Catalysis depends on serine 110, which acts as the Phosphoserine intermediate. Residues serine 110, aspartate 247, aspartate 249, and aspartate 251 each coordinate Mg(2+). Serine 110 bears the Phosphoserine mark.

This sequence belongs to the phosphohexose mutase family. It depends on Mg(2+) as a cofactor. In terms of processing, activated by phosphorylation.

It catalyses the reaction alpha-D-glucosamine 1-phosphate = D-glucosamine 6-phosphate. In terms of biological role, catalyzes the conversion of glucosamine-6-phosphate to glucosamine-1-phosphate. The protein is Phosphoglucosamine mutase of Tropheryma whipplei (strain TW08/27) (Whipple's bacillus).